We begin with the raw amino-acid sequence, 359 residues long: UDP-N-acetylglucosamine--N-acetylmuramyl-(pentapeptide) pyrophosphoryl-undecaprenol N-acetylglucosamine transferase (359 aa).

UDP-N-acetyl-alpha-D-glucosamine is bound by residues 15-17 (TGG), Asn-127, Arg-166, Ser-191, Ile-245, 264-269 (ALTVSE), and Gln-290.

It belongs to the glycosyltransferase 28 family. MurG subfamily.

Its subcellular location is the cell inner membrane. It catalyses the reaction di-trans,octa-cis-undecaprenyl diphospho-N-acetyl-alpha-D-muramoyl-L-alanyl-D-glutamyl-meso-2,6-diaminopimeloyl-D-alanyl-D-alanine + UDP-N-acetyl-alpha-D-glucosamine = di-trans,octa-cis-undecaprenyl diphospho-[N-acetyl-alpha-D-glucosaminyl-(1-&gt;4)]-N-acetyl-alpha-D-muramoyl-L-alanyl-D-glutamyl-meso-2,6-diaminopimeloyl-D-alanyl-D-alanine + UDP + H(+). Its pathway is cell wall biogenesis; peptidoglycan biosynthesis. Functionally, cell wall formation. Catalyzes the transfer of a GlcNAc subunit on undecaprenyl-pyrophosphoryl-MurNAc-pentapeptide (lipid intermediate I) to form undecaprenyl-pyrophosphoryl-MurNAc-(pentapeptide)GlcNAc (lipid intermediate II). The chain is UDP-N-acetylglucosamine--N-acetylmuramyl-(pentapeptide) pyrophosphoryl-undecaprenol N-acetylglucosamine transferase from Pseudomonas entomophila (strain L48).